Consider the following 668-residue polypeptide: GTP-binding protein 1 (668 aa).

The tract at residues 1 to 32 (MAAERSRSPVDSPVPASMFAPEPSSPGAARAA) is disordered. 8 positions are modified to phosphoserine: serine 6, serine 8, serine 12, serine 24, serine 25, serine 44, serine 47, and serine 69. The region spanning 158-389 (FLEVRVAVVG…LNLLSPRTSY (232 aa)) is the tr-type G domain. Residues 167 to 174 (GNVDAGKS) form a G1 region. 167–174 (GNVDAGKS) contacts GTP. A G2 region spans residues 206–210 (GRTSS). The tract at residues 252–255 (DLAG) is G3. Residues 252 to 256 (DLAGH) and 308 to 311 (TKID) each bind GTP. The tract at residues 308 to 311 (TKID) is G4. A G5 region spans residues 366–368 (SNV). The segment covering 573-595 (LLQTTNNSPMNSKPQQIKMQSTK) has biased composition (polar residues). The segment at 573–668 (LLQTTNNSPM…GACVTPASGC (96 aa)) is disordered. A Phosphoserine modification is found at serine 580. Low complexity predominate over residues 609 to 619 (GVPAAGGPPTG). The span at 624-637 (SLGTAQAASTSGLQ) shows a compositional bias: polar residues. The span at 646–657 (GRRRGGQRHKVK) shows a compositional bias: basic residues.

The protein belongs to the TRAFAC class translation factor GTPase superfamily. Classic translation factor GTPase family. GTPBP1 subfamily. As to quaternary structure, interacts with EXOSC2/RRP4, EXOSC3/RRP40, EXOSC5/RRP46, HNRNPD, HNRNPR and SYNCRIP. Identified in a complex with AANAT mRNA, but does not bind mRNA by itself. In terms of tissue distribution, detected in some neurons in the brain cortex. Detected in small arteries, dendritic cells and macrophages in the thymus. Detected in lung bronchi, in bronchial epithelial cells and in bronchial smooth muscle cells. Detected in smooth muscle cells in a broad range of organs (at protein level). Expressed in brain, thymus, lung, and kidney.

The protein resides in the cytoplasm. Its function is as follows. Promotes degradation of target mRNA species. Plays a role in the regulation of circadian mRNA stability. Binds GTP and has GTPase activity. The chain is GTP-binding protein 1 (Gtpbp1) from Mus musculus (Mouse).